Reading from the N-terminus, the 1461-residue chain is Regulation of nuclear pre-mRNA domain-containing protein 2 (1461 aa).

Ala-2 carries the N-acetylalanine modification. At Ser-16 the chain carries Phosphoserine. In terms of domain architecture, CID spans 19-149 (SAGALESSLD…ALREALSTTF (131 aa)). 2 disordered regions span residues 311 to 438 (STLP…TSLS) and 469 to 504 (NTGV…TTSH). Basic and acidic residues predominate over residues 352-368 (ESEKSATPEPVTDNRDV). Ser-356 bears the Phosphoserine mark. Phosphothreonine is present on Thr-358. Over residues 369–378 (EDMELSDVED) the composition is skewed to acidic residues. At Ser-374 the chain carries Phosphoserine. Basic and acidic residues predominate over residues 379-394 (DGSKIIVEDRKEKPAE). Residues 397 to 416 (AVSTSVPTKPTENISKASSC) show a composition bias toward polar residues. Composition is skewed to low complexity over residues 417 to 426 (TPVPVTMTAT) and 473 to 491 (SPAS…NLTS). Phosphoserine occurs at positions 473, 476, and 479. Thr-482 is modified (phosphothreonine). A Phosphoserine modification is found at Ser-485. Thr-517 is modified (phosphothreonine). The segment at 547 to 623 (TGNPVPASEA…SPGLPSTTFK (77 aa)) is disordered. Residues 553 to 566 (ASEAASQSTSASPA) show a composition bias toward low complexity. A Phosphoserine modification is found at Ser-564. Positions 567–583 (NTTVSTIKGRNLPSSAQ) are enriched in polar residues. Ser-593 carries the phosphoserine modification. Positions 593–614 (SPNSSTSEVSSTSASKASIGQS) are enriched in low complexity. Thr-598 carries the phosphothreonine modification. A phosphoserine mark is found at Ser-614, Ser-663, Ser-665, and Ser-716. 5 disordered regions span residues 696 to 849 (GSSA…MMNL), 900 to 997 (SENC…EKVL), 1016 to 1102 (ASRK…SGEP), 1132 to 1312 (STSG…APPL), and 1340 to 1461 (FGVL…PPRY). The residue at position 723 (Thr-723) is a Phosphothreonine. The residue at position 730 (Ser-730) is a Phosphoserine. Residue Thr-732 is modified to Phosphothreonine. The span at 742–752 (PTSSSVDTMSL) shows a compositional bias: polar residues. Phosphoserine is present on residues Ser-758 and Ser-762. Positions 758–768 (SPGSSTPSSTR) are enriched in low complexity. Thr-763 is modified (phosphothreonine). A phosphoserine mark is found at Ser-769, Ser-817, Ser-826, Ser-900, Ser-909, Ser-928, Ser-965, and Ser-976. Polar residues predominate over residues 927–954 (RSPSPSKNDSFFTPDSNHNSLSQSTTGH). The segment covering 1031 to 1055 (SKGTPSDGVSLSNLTQPSLTATDQQ) has biased composition (polar residues). A phosphoserine mark is found at Ser-1068 and Ser-1099. Low complexity predominate over residues 1141–1150 (GPSSASELAS). Residues 1151 to 1160 (LGGGGSGGLT) are compositionally biased toward gly residues. Over residues 1174–1189 (FQESVGSFRSNSFNST) the composition is skewed to polar residues. Pro residues-rich tracts occupy residues 1267 to 1277 (FPTPPPPPPPG) and 1290 to 1299 (STPPPPPPPV). Residue Arg-1366 is modified to Asymmetric dimethylarginine. Gly residues predominate over residues 1382–1391 (PHGGGGGGGS). Residues 1417–1434 (PRPDFRPREPFLSRDPFH) show a composition bias toward basic and acidic residues. Asymmetric dimethylarginine occurs at positions 1424 and 1430.

Associates with the RNA polymerase II complex.

This is Regulation of nuclear pre-mRNA domain-containing protein 2 (RPRD2) from Homo sapiens (Human).